The following is a 440-amino-acid chain: Lysine histidine transporter-like 6 (440 aa).

The span at 1-10 (MVSSSPVSPS) shows a compositional bias: polar residues. The tract at residues 1-25 (MVSSSPVSPSKETDRKSGEKWTAED) is disordered. The Cytoplasmic segment spans residues 1–31 (MVSSSPVSPSKETDRKSGEKWTAEDPSRPAK). Over residues 11–25 (KETDRKSGEKWTAED) the composition is skewed to basic and acidic residues. Residues 32 to 51 (WWYSTFHTVTAMIGAGVLSL) traverse the membrane as a helical segment. The Extracellular portion of the chain corresponds to 52 to 61 (PYAMAYLGWG). Residues 62–82 (PGTFVLAMTWGLTLNTMWQMV) form a helical membrane-spanning segment. At 83–109 (QLHECVPGTRFDRYIDLGRYAFGPKLG) the chain is on the cytoplasmic side. Residues 110–130 (PWIVLPQQLIVQVGCNIVYMV) form a helical membrane-spanning segment. The Extracellular segment spans residues 131–152 (TGGKCLKQFVEITCSTCTPVRQ). The helical transmembrane segment at 153–173 (SYWILGFGGVHFILSQLPNFN) threads the bilayer. Ser-174 is a topological domain (cytoplasmic). Residues 175-195 (VAGVSLAAAVMSLCYSTIAWG) form a helical membrane-spanning segment. Topologically, residues 196 to 221 (GSIAHGRVPDVSYDYKATNPGDFTFR) are extracellular. Residues 222 to 242 (VFNALGQISFAFAGHAVALEI) traverse the membrane as a helical segment. Over 243–261 (QATMPSTPERPSKVPMWQG) the chain is Cytoplasmic. A helical transmembrane segment spans residues 262–282 (VIGAYVVNAVCYFPVALICYW). Residues 283 to 300 (AFGQDVDDNVLMNLQRPA) lie on the Extracellular side of the membrane. A helical transmembrane segment spans residues 301–321 (WLIAAANLMVVVHVIGSYQVF). Topologically, residues 322–353 (AMPVFDLLERMMVNKFGFKHGVVLRFFTRTIY) are cytoplasmic. 2 helical membrane-spanning segments follow: residues 354 to 374 (VAFTLFIGVSFPFFGDLLGFF) and 375 to 395 (GGFGFAPTSFFLPSIMWLIIK). At 396 to 399 (KPRR) the chain is on the cytoplasmic side. A helical membrane pass occupies residues 400–420 (FSVTWFVNWISIIVGVFIMLA). Over 421–440 (STIGGLRNIIADSSTYSFYA) the chain is Extracellular.

The protein belongs to the amino acid/polyamine transporter 2 family. Amino acid/auxin permease (AAAP) (TC 2.A.18.2) subfamily.

Its subcellular location is the cell membrane. Functionally, amino acid transporter. The protein is Lysine histidine transporter-like 6 of Arabidopsis thaliana (Mouse-ear cress).